The following is a 195-amino-acid chain: uncharacterized protein (195 aa).

Residues 1 to 35 are disordered; sequence MASSSSAALRPFGTARLTPGRQTGRQTQQQISAPE. Residues 20 to 30 are compositionally biased toward low complexity; the sequence is GRQTGRQTQQQ. In terms of domain architecture, MSP spans 76–184; that stretch reads GVTVIPRVAR…PASINMALEA (109 aa).

This is an uncharacterized protein from Caenorhabditis elegans.